The chain runs to 786 residues: LPS-assembly protein LptD (786 aa).

The N-terminal stretch at 1-24 (MSFTSRSLLASFTGCLLYGTPAIA) is a signal peptide.

This sequence belongs to the LptD family. In terms of assembly, component of the lipopolysaccharide transport and assembly complex. Interacts with LptE and LptA.

The protein localises to the cell outer membrane. Functionally, together with LptE, is involved in the assembly of lipopolysaccharide (LPS) at the surface of the outer membrane. The polypeptide is LPS-assembly protein LptD (Aliivibrio fischeri (strain ATCC 700601 / ES114) (Vibrio fischeri)).